A 501-amino-acid polypeptide reads, in one-letter code: Probable sucrose utilization protein SUC1 (501 aa).

Positions Cys13–Cys39 form a DNA-binding region, zn(2)-C6 fungal-type.

It belongs to the MAL13 family.

It is found in the nucleus. Affects sucrose utilization and alpha-glucosidase activity. Probable transcriptional activator. The sequence is that of Probable sucrose utilization protein SUC1 (SUC1) from Candida albicans (strain SC5314 / ATCC MYA-2876) (Yeast).